Here is a 395-residue protein sequence, read N- to C-terminus: Dual specificity protein phosphatase 4 (395 aa).

An N-acetylvaline modification is found at V2. The Rhodanese domain occupies 42–160; the sequence is SGGKCLLLDC…FSSEYPEFCS (119 aa). A Tyrosine-protein phosphatase domain is found at 196–337; that stretch reads GPVEILPFLY…LLQFESQVLT (142 aa). Residue C281 is the Phosphocysteine intermediate of the active site. 2 positions are modified to phosphoserine; by MAPK: S387 and S392.

This sequence belongs to the protein-tyrosine phosphatase family. Non-receptor class dual specificity subfamily. In terms of assembly, hollow spherical complex composed of 24 subunits with pseudooctahedral symmetry, has a tetramer as the basic unit. In terms of processing, phosphorylation in the C-terminus by ERK1/2 inhibits proteasomal degradation and stabilizes the protein. In terms of tissue distribution, expressed at moderate levels in nearly all tissues and cells including brain, spleen, and testes with the higher expression in the heart and lung and lower expression in skeletal muscle and kidney. Undetectable in liver. Expressed in many areas of the brain with very strong expression in the hippocampus, piriform cortex, and the suprachiasmatic nucleus.

It localises to the nucleus. It carries out the reaction O-phospho-L-tyrosyl-[protein] + H2O = L-tyrosyl-[protein] + phosphate. The enzyme catalyses O-phospho-L-seryl-[protein] + H2O = L-seryl-[protein] + phosphate. It catalyses the reaction O-phospho-L-threonyl-[protein] + H2O = L-threonyl-[protein] + phosphate. Its function is as follows. Regulates mitogenic signal transduction by dephosphorylating both Thr and Tyr residues on MAP kinases ERK1 and ERK2. This chain is Dual specificity protein phosphatase 4 (Dusp4), found in Rattus norvegicus (Rat).